Here is a 129-residue protein sequence, read N- to C-terminus: MRHGHGLRKLNRTSSHRLAMLQNMMNSLIEHEAIKTTLPKAKELRRVIEPMITLAKEDSVANRRLAFNRLRDRDSVTKLFNDLGPRFKTRPGGYTRILKMGFRVGDNAPMAYVELVDRAETPEVSSTEA.

Belongs to the bacterial ribosomal protein bL17 family. In terms of assembly, part of the 50S ribosomal subunit. Contacts protein L32.

This chain is Large ribosomal subunit protein bL17, found in Acidovorax ebreus (strain TPSY) (Diaphorobacter sp. (strain TPSY)).